Consider the following 305-residue polypeptide: Ribonuclease BN (305 aa).

His-64, His-66, Asp-68, His-69, His-141, Asp-212, and His-270 together coordinate Zn(2+). The active-site Proton acceptor is the Asp-68.

It belongs to the RNase Z family. RNase BN subfamily. In terms of assembly, homodimer. Zn(2+) serves as cofactor.

In terms of biological role, zinc phosphodiesterase, which has both exoribonuclease and endoribonuclease activities. In Salmonella gallinarum (strain 287/91 / NCTC 13346), this protein is Ribonuclease BN.